Consider the following 355-residue polypeptide: 3-dehydroquinate synthase (355 aa).

Residues 106–110 (GVVGD), 130–131 (TS), K143, and K152 contribute to the NAD(+) site. Positions 185, 246, and 262 each coordinate Zn(2+).

It belongs to the sugar phosphate cyclases superfamily. Dehydroquinate synthase family. Requires Co(2+) as cofactor. Zn(2+) serves as cofactor. The cofactor is NAD(+).

Its subcellular location is the cytoplasm. It carries out the reaction 7-phospho-2-dehydro-3-deoxy-D-arabino-heptonate = 3-dehydroquinate + phosphate. It functions in the pathway metabolic intermediate biosynthesis; chorismate biosynthesis; chorismate from D-erythrose 4-phosphate and phosphoenolpyruvate: step 2/7. In terms of biological role, catalyzes the conversion of 3-deoxy-D-arabino-heptulosonate 7-phosphate (DAHP) to dehydroquinate (DHQ). This chain is 3-dehydroquinate synthase, found in Latilactobacillus sakei subsp. sakei (strain 23K) (Lactobacillus sakei subsp. sakei).